Here is a 1931-residue protein sequence, read N- to C-terminus: Chitin synthase 5 (1931 aa).

Residues 11 to 777 form the Myosin motor domain; the sequence is LGVTDLSSLA…LFRFLEDRLR (767 aa). Position 122 to 129 (122 to 129) interacts with ATP; sequence GPTGSGKS. 3 N-linked (GlcNAc...) asparagine glycosylation sites follow: Asn-510, Asn-538, and Asn-676. An actin-binding region spans residues 655 to 677; that stretch reads VDSLLKSFDQTQTWYIFALRPND. A disordered region spans residues 798 to 817; that stretch reads DPFSPHRYQPTSFDSQDHVY. An N-linked (GlcNAc...) asparagine glycan is attached at Asn-842. The next 2 membrane-spanning stretches (helical) occupy residues 912–932 and 951–971; these read WVWL…SKIA and MIIW…GPVI. Residues Asn-1062, Asn-1078, and Asn-1146 are each glycosylated (N-linked (GlcNAc...) asparagine). The chain crosses the membrane as a helical span at residues 1220–1240; sequence ILLALSCVMVAVIGFKFLSAL. N-linked (GlcNAc...) asparagine glycosylation occurs at Asn-1583. Transmembrane regions (helical) follow at residues 1615-1635, 1641-1661, and 1668-1688; these read LSTI…YLIV, IPTL…MIFI, and MIAW…LLPL. A disordered region spans residues 1826 to 1847; it reads AHRPSLDDTSSFHQPYQPAPRP. The DEK-C domain occupies 1875 to 1930; it reads AITDSQLERSIRKICANAELDKLTKKGVRKELEREYGVELTERREAINRLVEKVLT.

The protein in the N-terminal section; belongs to the TRAFAC class CC myosin-kinesin ATPase superfamily. Myosin family. In the C-terminal section; belongs to the chitin synthase family. Class V subfamily.

The protein localises to the cell membrane. It is found in the cell septum. The protein resides in the cell tip. It carries out the reaction [(1-&gt;4)-N-acetyl-beta-D-glucosaminyl](n) + UDP-N-acetyl-alpha-D-glucosamine = [(1-&gt;4)-N-acetyl-beta-D-glucosaminyl](n+1) + UDP + H(+). Functionally, polymerizes chitin, a structural polymer of the cell wall and septum, by transferring the sugar moiety of UDP-GlcNAc to the non-reducing end of the growing chitin polymer. Produces a large proportion of the chitin that is not deacetylated to chitosan. This is Chitin synthase 5 from Cryptococcus neoformans var. grubii serotype A (strain H99 / ATCC 208821 / CBS 10515 / FGSC 9487) (Filobasidiella neoformans var. grubii).